Reading from the N-terminus, the 324-residue chain is DNA primase small subunit PriS (324 aa).

Catalysis depends on residues aspartate 94, aspartate 96, and aspartate 274.

Belongs to the eukaryotic-type primase small subunit family. In terms of assembly, heterodimer of a small subunit (PriS) and a large subunit (PriL). It depends on Mg(2+) as a cofactor. Requires Mn(2+) as cofactor.

Its function is as follows. Catalytic subunit of DNA primase, an RNA polymerase that catalyzes the synthesis of short RNA molecules used as primers for DNA polymerase during DNA replication. The small subunit contains the primase catalytic core and has DNA synthesis activity on its own. Binding to the large subunit stabilizes and modulates the activity, increasing the rate of DNA synthesis while decreasing the length of the DNA fragments, and conferring RNA synthesis capability. The DNA polymerase activity may enable DNA primase to also catalyze primer extension after primer synthesis. May also play a role in DNA repair. This is DNA primase small subunit PriS from Methanobrevibacter smithii (strain ATCC 35061 / DSM 861 / OCM 144 / PS).